The following is a 334-amino-acid chain: Ketol-acid reductoisomerase (NADP(+)) (334 aa).

A KARI N-terminal Rossmann domain is found at 1-181 (MNRYYDKNAD…GGGRTGILET (181 aa)). Residues 24–27 (YGSQ), R47, S50, S52, and 82–85 (DEFQ) contribute to the NADP(+) site. Residue H107 is part of the active site. Position 133 (G133) interacts with NADP(+). The KARI C-terminal knotted domain maps to 182–323 (SFKDETETDL…ESLRSMMPWI (142 aa)). The Mg(2+) site is built by D190, E194, E226, and E230. S251 lines the substrate pocket.

It belongs to the ketol-acid reductoisomerase family. It depends on Mg(2+) as a cofactor.

The enzyme catalyses (2R)-2,3-dihydroxy-3-methylbutanoate + NADP(+) = (2S)-2-acetolactate + NADPH + H(+). It catalyses the reaction (2R,3R)-2,3-dihydroxy-3-methylpentanoate + NADP(+) = (S)-2-ethyl-2-hydroxy-3-oxobutanoate + NADPH + H(+). It functions in the pathway amino-acid biosynthesis; L-isoleucine biosynthesis; L-isoleucine from 2-oxobutanoate: step 2/4. Its pathway is amino-acid biosynthesis; L-valine biosynthesis; L-valine from pyruvate: step 2/4. Functionally, involved in the biosynthesis of branched-chain amino acids (BCAA). Catalyzes an alkyl-migration followed by a ketol-acid reduction of (S)-2-acetolactate (S2AL) to yield (R)-2,3-dihydroxy-isovalerate. In the isomerase reaction, S2AL is rearranged via a Mg-dependent methyl migration to produce 3-hydroxy-3-methyl-2-ketobutyrate (HMKB). In the reductase reaction, this 2-ketoacid undergoes a metal-dependent reduction by NADPH to yield (R)-2,3-dihydroxy-isovalerate. This is Ketol-acid reductoisomerase (NADP(+)) from Ruthia magnifica subsp. Calyptogena magnifica.